Reading from the N-terminus, the 642-residue chain is Threonine--tRNA ligase (642 aa).

The TGS domain occupies 1–61 (MPIITLPDGS…STDSDLSIIT (61 aa)). The interval 243–534 (DHRKIGKQLD…LIEEYAGKFP (292 aa)) is catalytic. Zn(2+) is bound by residues Cys334, His385, and His511.

It belongs to the class-II aminoacyl-tRNA synthetase family. As to quaternary structure, homodimer. The cofactor is Zn(2+).

Its subcellular location is the cytoplasm. The enzyme catalyses tRNA(Thr) + L-threonine + ATP = L-threonyl-tRNA(Thr) + AMP + diphosphate + H(+). Its function is as follows. Catalyzes the attachment of threonine to tRNA(Thr) in a two-step reaction: L-threonine is first activated by ATP to form Thr-AMP and then transferred to the acceptor end of tRNA(Thr). Also edits incorrectly charged L-seryl-tRNA(Thr). This is Threonine--tRNA ligase from Shewanella denitrificans (strain OS217 / ATCC BAA-1090 / DSM 15013).